The chain runs to 243 residues: MGRGKVQLKRIENKINRQVTFSKRRSGLLKKAHEISVLCDAEVALIIFSTKGKLYEFATDSCMDKILERYERYSYAEKVLVSTESEIQGNWCHEYRKLKAKVETIQKCQKHLMGEDLESLNLKELQQLEQQLESSLKHIRSRKNQLMHESISELQRKERSLQEENKALQKELVEKQKAHTQQAQWEQTHPQTSSSSSSMQREAPPTTNISNRPAAAGERTEEAAGQAQARVGLPPWMVSHISG.

In terms of domain architecture, MADS-box spans 1 to 61 (MGRGKVQLKR…GKLYEFATDS (61 aa)). The region spanning 88–178 (QGNWCHEYRK…QKELVEKQKA (91 aa)) is the K-box domain. Positions 122–178 (LKELQQLEQQLESSLKHIRSRKNQLMHESISELQRKERSLQEENKALQKELVEKQKA) form a coiled coil. The tract at residues 173 to 243 (VEKQKAHTQQ…PPWMVSHISG (71 aa)) is disordered. Residues 179-192 (HTQQAQWEQTHPQT) are compositionally biased toward polar residues.

The protein resides in the nucleus. Its function is as follows. Component of a grass-specific mechanism of vernalization, a process by which prolonged cold exposure provides competence to flower in daylengths longer than 12 hours. Involved in the exit of vernalization and confers flowering competency at the expense of freezing tolerance, probably by promoting the expression of VRN3; this process is essential in cv. Bd29-1 for flowering but seems do not occur in cv. Bd21. This chain is Protein VERNALIZATION 1, found in Brachypodium distachyon (Purple false brome).